The primary structure comprises 1366 residues: DNA-directed RNA polymerase subunit beta'' (1366 aa).

Zn(2+) contacts are provided by cysteine 220, cysteine 291, cysteine 298, and cysteine 301.

This sequence belongs to the RNA polymerase beta' chain family. RpoC2 subfamily. In terms of assembly, in plastids the minimal PEP RNA polymerase catalytic core is composed of four subunits: alpha, beta, beta', and beta''. When a (nuclear-encoded) sigma factor is associated with the core the holoenzyme is formed, which can initiate transcription. Zn(2+) serves as cofactor.

It localises to the plastid. Its subcellular location is the chloroplast. The enzyme catalyses RNA(n) + a ribonucleoside 5'-triphosphate = RNA(n+1) + diphosphate. Functionally, DNA-dependent RNA polymerase catalyzes the transcription of DNA into RNA using the four ribonucleoside triphosphates as substrates. This chain is DNA-directed RNA polymerase subunit beta'', found in Phaseolus vulgaris (Kidney bean).